The sequence spans 505 residues: ATP synthase subunit alpha (505 aa).

170–177 (GDRQTGKT) lines the ATP pocket.

Belongs to the ATPase alpha/beta chains family. F-type ATPases have 2 components, CF(1) - the catalytic core - and CF(0) - the membrane proton channel. CF(1) has five subunits: alpha(3), beta(3), gamma(1), delta(1), epsilon(1). CF(0) has four main subunits: a(1), b(1), b'(1) and c(9-12).

The protein localises to the cellular thylakoid membrane. It catalyses the reaction ATP + H2O + 4 H(+)(in) = ADP + phosphate + 5 H(+)(out). Produces ATP from ADP in the presence of a proton gradient across the membrane. The alpha chain is a regulatory subunit. This is ATP synthase subunit alpha from Prochlorococcus marinus (strain MIT 9515).